The primary structure comprises 268 residues: Type-5 uracil-DNA glycosylase (268 aa).

Residues 1–29 (MHPKTGRAFRSPVEPGSGWPGDPATPQTP) form a disordered region. [4Fe-4S] cluster-binding residues include C57, C60, C161, and C176.

Belongs to the uracil-DNA glycosylase (UDG) superfamily. Type 5 (UDGb) family.

Functionally, DNA glycosylase with broad substrate specificity. The protein is Type-5 uracil-DNA glycosylase of Mycobacterium bovis (strain ATCC BAA-935 / AF2122/97).